The following is a 279-amino-acid chain: Undecaprenyl-diphosphatase (279 aa).

Helical transmembrane passes span 1–21 (MVLE…LPIS), 39–59 (GRFF…LYFF), 96–116 (LLLV…VRFV), 128–148 (FTMG…DALF), 155–175 (IFQI…FAII), 201–221 (FSFL…LVAG), 231–251 (YSLI…SALL), and 259–279 (FVLF…VSFF).

This sequence belongs to the UppP family.

The protein resides in the cell membrane. The enzyme catalyses di-trans,octa-cis-undecaprenyl diphosphate + H2O = di-trans,octa-cis-undecaprenyl phosphate + phosphate + H(+). Its function is as follows. Catalyzes the dephosphorylation of undecaprenyl diphosphate (UPP). Confers resistance to bacitracin. The sequence is that of Undecaprenyl-diphosphatase from Tropheryma whipplei (strain Twist) (Whipple's bacillus).